A 652-amino-acid polypeptide reads, in one-letter code: Acetyl-coenzyme A synthetase (652 aa).

CoA-binding positions include 189-192 and Thr311; that span reads RGGK. ATP is bound by residues 387–389, 411–416, Asp500, and Arg515; these read GEP and DTWWQT. Ser523 contacts CoA. Residue Arg526 coordinates ATP. The Mg(2+) site is built by Val537, His539, and Val542. Arg584 is a CoA binding site. N6-acetyllysine is present on Lys609.

It belongs to the ATP-dependent AMP-binding enzyme family. Requires Mg(2+) as cofactor. Acetylated. Deacetylation by the SIR2-homolog deacetylase activates the enzyme.

It carries out the reaction acetate + ATP + CoA = acetyl-CoA + AMP + diphosphate. Functionally, catalyzes the conversion of acetate into acetyl-CoA (AcCoA), an essential intermediate at the junction of anabolic and catabolic pathways. AcsA undergoes a two-step reaction. In the first half reaction, AcsA combines acetate with ATP to form acetyl-adenylate (AcAMP) intermediate. In the second half reaction, it can then transfer the acetyl group from AcAMP to the sulfhydryl group of CoA, forming the product AcCoA. This Rhizobium rhizogenes (Agrobacterium rhizogenes) protein is Acetyl-coenzyme A synthetase.